A 444-amino-acid chain; its full sequence is MDALQESPPSHHSLPSALPSATGGNGTVATMHNPFERPLEGIAPWNFTMLAALMGTITALSLGENFAVIVVTARFRQLRQPLNYVLVNLAAADLLVSAIGGSVSFFTNIKGYFFLGVHACVLEGFAVTYFGVVALWSLALLAFERYFVICRPLGNFRLQSKHAVLGLAVVWVFSLACTLPPVLGWSSYRPSMIGTTCEPNWYSGELHDHTFILMFFSTCFIFPLAVIFFSYGKLIQKLKKASETQRGLESTRRAEQQVTRMVVVMILAFLVCWMPYATFSIVVTACPTIHLDPLLAAVPAFFSKTATVYNPVIYIFMNKQFRDCFVQVLPCKGLKKVSATQTAGAQDTEHTASVNTQSPGNRHNIALAAGSLRFTGAVAPSPATGVVEPTMSAAGSMGAPPNKSTAPCQQQGQQQQQQGTPIPAITHVQPLLTHSESVSKICPV.

The interval methionine 1–serine 20 is disordered. Topologically, residues methionine 1–asparagine 46 are extracellular. The segment covering serine 7–serine 20 has biased composition (low complexity). Asparagine 25 carries an N-linked (GlcNAc...) asparagine glycan. A helical transmembrane segment spans residues phenylalanine 47–valine 71. At threonine 72–asparagine 83 the chain is on the cytoplasmic side. The chain crosses the membrane as a helical span at residues tyrosine 84–asparagine 108. Topologically, residues isoleucine 109–glutamate 123 are extracellular. Cysteine 120 and cysteine 197 are joined by a disulfide. The chain crosses the membrane as a helical span at residues glycine 124–phenylalanine 143. Residues glutamate 144–histidine 162 are Cytoplasmic-facing. Residues alanine 163–serine 186 form a helical membrane-spanning segment. Residues serine 187–threonine 210 are Extracellular-facing. A helical membrane pass occupies residues phenylalanine 211 to leucine 238. Residues lysine 239–arginine 260 are Cytoplasmic-facing. Residues methionine 261–threonine 284 traverse the membrane as a helical segment. The Extracellular portion of the chain corresponds to alanine 285 to aspartate 292. A helical membrane pass occupies residues proline 293 to methionine 317. Residue lysine 304 is modified to N6-(retinylidene)lysine. The Cytoplasmic segment spans residues asparagine 318–valine 444. The S-palmitoyl cysteine moiety is linked to residue cysteine 331. 2 disordered regions span residues glutamine 341–glycine 360 and glutamate 388–threonine 420. Low complexity predominate over residues glutamine 409–glycine 419.

The protein belongs to the G-protein coupled receptor 1 family. Opsin subfamily. Post-translationally, phosphorylated on some or all of the serine and threonine residues present in the C-terminal region. As to expression, pineal gland.

It is found in the membrane. The polypeptide is Pineal opsin (Petromyzon marinus (Sea lamprey)).